The chain runs to 258 residues: Proliferating cell nuclear antigen (258 aa).

A DNA-binding region spans residues 61–80 (RCDHPVTLGMDLTSLSKILR). A Glycyl lysine isopeptide (Lys-Gly) (interchain with G-Cter in SUMO) cross-link involves residue lysine 127. A Glycyl lysine isopeptide (Lys-Gly) (interchain with G-Cter in SUMO); alternate cross-link involves residue lysine 164. Lysine 164 is covalently cross-linked (Glycyl lysine isopeptide (Lys-Gly) (interchain with G-Cter in ubiquitin); alternate).

This sequence belongs to the PCNA family. In terms of assembly, homotrimer. Interacts with RAD30. Interacts with MCM10. Interacts with UBP10. Post-translationally, sumoylated on Lys-164, and to a lesser extent on Lys-127 by the UBC9/SIZ1 complex during S-phase; which impairs ubiquitination and function in DNA repair. In terms of processing, monoubiquitinated on Lys-164 by the UBC2/RAD18 complex upon DNA damage, and then polyubiquitinated through 'Lys-63'-linkage by UBC13/MMS2. Ubiquitination is required for UBC2-mediated DNA repair. Lys-164 is deubiquitinated by UBP10.

The protein localises to the nucleus. In terms of biological role, this protein is an auxiliary protein of DNA polymerase delta and is involved in the control of eukaryotic DNA replication by increasing the polymerase's processibility during elongation of the leading strand. Involved in DNA repair. The chain is Proliferating cell nuclear antigen (POL30) from Saccharomyces cerevisiae (strain ATCC 204508 / S288c) (Baker's yeast).